A 432-amino-acid chain; its full sequence is Adenylosuccinate synthetase (432 aa).

GTP is bound by residues glycine 12–lysine 18 and glycine 40–threonine 42. The active-site Proton acceptor is the aspartate 13. Aspartate 13 and glycine 40 together coordinate Mg(2+). IMP-binding positions include aspartate 13–lysine 16, asparagine 38–histidine 41, threonine 130, arginine 144, glutamine 226, threonine 241, and arginine 305. Histidine 41 acts as the Proton donor in catalysis. Substrate is bound at residue serine 301–arginine 307. GTP is bound by residues arginine 307, lysine 333–aspartate 335, and serine 415–glycine 417.

It belongs to the adenylosuccinate synthetase family. Homodimer. The cofactor is Mg(2+).

The protein localises to the cytoplasm. The enzyme catalyses IMP + L-aspartate + GTP = N(6)-(1,2-dicarboxyethyl)-AMP + GDP + phosphate + 2 H(+). The protein operates within purine metabolism; AMP biosynthesis via de novo pathway; AMP from IMP: step 1/2. Its function is as follows. Plays an important role in the de novo pathway of purine nucleotide biosynthesis. Catalyzes the first committed step in the biosynthesis of AMP from IMP. The chain is Adenylosuccinate synthetase from Bdellovibrio bacteriovorus (strain ATCC 15356 / DSM 50701 / NCIMB 9529 / HD100).